Reading from the N-terminus, the 393-residue chain is Succinate--CoA ligase [ADP-forming] subunit beta (393 aa).

Positions 9–237 constitute an ATP-grasp domain; it reads RDLFAKHGVP…KDAANPLEAA (229 aa). Residues Lys-45, 52-54, Glu-92, Pro-95, and Glu-100 contribute to the ATP site; that span reads GRG. Asn-192 and Asp-206 together coordinate Mg(2+). Substrate-binding positions include Asn-257 and 319–321; that span reads GIT.

Belongs to the succinate/malate CoA ligase beta subunit family. Heterotetramer of two alpha and two beta subunits. Mg(2+) is required as a cofactor.

It catalyses the reaction succinate + ATP + CoA = succinyl-CoA + ADP + phosphate. The catalysed reaction is GTP + succinate + CoA = succinyl-CoA + GDP + phosphate. The protein operates within carbohydrate metabolism; tricarboxylic acid cycle; succinate from succinyl-CoA (ligase route): step 1/1. Its function is as follows. Succinyl-CoA synthetase functions in the citric acid cycle (TCA), coupling the hydrolysis of succinyl-CoA to the synthesis of either ATP or GTP and thus represents the only step of substrate-level phosphorylation in the TCA. The beta subunit provides nucleotide specificity of the enzyme and binds the substrate succinate, while the binding sites for coenzyme A and phosphate are found in the alpha subunit. This is Succinate--CoA ligase [ADP-forming] subunit beta from Streptomyces griseus subsp. griseus (strain JCM 4626 / CBS 651.72 / NBRC 13350 / KCC S-0626 / ISP 5235).